The sequence spans 152 residues: Large ribosomal subunit protein uL15 (152 aa).

Positions 1 to 12 are enriched in polar residues; it reads MTSTLNTLKSNT. The tract at residues 1-57 is disordered; sequence MTSTLNTLKSNTGSRKKKLRKGRGIAAGQGASCGFGMRGQKSRSGRPTRPGFEGGQM. A compositionally biased stretch (basic residues) spans 14–23; sequence SRKKKLRKGR. Gly residues predominate over residues 25 to 37; sequence IAAGQGASCGFGM.

The protein belongs to the universal ribosomal protein uL15 family. As to quaternary structure, part of the 50S ribosomal subunit.

Its function is as follows. Binds to the 23S rRNA. This chain is Large ribosomal subunit protein uL15, found in Prochlorococcus marinus subsp. pastoris (strain CCMP1986 / NIES-2087 / MED4).